Consider the following 247-residue polypeptide: 1-(5-phosphoribosyl)-5-[(5-phosphoribosylamino)methylideneamino] imidazole-4-carboxamide isomerase (247 aa).

The active-site Proton acceptor is the Asp-8. The Proton donor role is filled by Asp-131.

It belongs to the HisA/HisF family.

It localises to the cytoplasm. It catalyses the reaction 1-(5-phospho-beta-D-ribosyl)-5-[(5-phospho-beta-D-ribosylamino)methylideneamino]imidazole-4-carboxamide = 5-[(5-phospho-1-deoxy-D-ribulos-1-ylimino)methylamino]-1-(5-phospho-beta-D-ribosyl)imidazole-4-carboxamide. It functions in the pathway amino-acid biosynthesis; L-histidine biosynthesis; L-histidine from 5-phospho-alpha-D-ribose 1-diphosphate: step 4/9. The polypeptide is 1-(5-phosphoribosyl)-5-[(5-phosphoribosylamino)methylideneamino] imidazole-4-carboxamide isomerase (Acidovorax sp. (strain JS42)).